A 102-amino-acid chain; its full sequence is Nucleoid-associated protein WIGBR5260 (102 aa).

It belongs to the YbaB/EbfC family. In terms of assembly, homodimer.

It is found in the cytoplasm. It localises to the nucleoid. Functionally, binds to DNA and alters its conformation. May be involved in regulation of gene expression, nucleoid organization and DNA protection. This Wigglesworthia glossinidia brevipalpis protein is Nucleoid-associated protein WIGBR5260.